Here is a 193-residue protein sequence, read N- to C-terminus: Ion-translocating oxidoreductase complex subunit A (193 aa).

6 consecutive transmembrane segments (helical) span residues 5 to 25 (LLLF…FLGL), 47 to 67 (FVIT…LLPL), 72 to 92 (LRTM…EMVV), 102 to 122 (LLGI…VPLL), 134 to 154 (AIYG…FAGV), and 171 to 191 (SIAL…AGLV).

This sequence belongs to the NqrDE/RnfAE family. In terms of assembly, the complex is composed of six subunits: RnfA, RnfB, RnfC, RnfD, RnfE and RnfG.

The protein localises to the cell inner membrane. In terms of biological role, part of a membrane-bound complex that couples electron transfer with translocation of ions across the membrane. This chain is Ion-translocating oxidoreductase complex subunit A, found in Erwinia tasmaniensis (strain DSM 17950 / CFBP 7177 / CIP 109463 / NCPPB 4357 / Et1/99).